The sequence spans 99 residues: MFAVVETGGKQYKVKEQDVIKVELLKAGIGEKVLLKSLATFNNDGSGSFSASSGSVSAEVVAHCRSDKIIVFKKRRRKNYRRKNGHRQNMTVLRVVEVR.

The protein belongs to the bacterial ribosomal protein bL21 family. As to quaternary structure, part of the 50S ribosomal subunit. Contacts protein L20.

Functionally, this protein binds to 23S rRNA in the presence of protein L20. The sequence is that of Large ribosomal subunit protein bL21 from Anaplasma phagocytophilum (strain HZ).